The sequence spans 470 residues: Argininosuccinate lyase (470 aa).

It belongs to the lyase 1 family. Argininosuccinate lyase subfamily.

The protein resides in the cytoplasm. It carries out the reaction 2-(N(omega)-L-arginino)succinate = fumarate + L-arginine. It functions in the pathway amino-acid biosynthesis; L-arginine biosynthesis; L-arginine from L-ornithine and carbamoyl phosphate: step 3/3. The protein is Argininosuccinate lyase of Mycolicibacterium vanbaalenii (strain DSM 7251 / JCM 13017 / BCRC 16820 / KCTC 9966 / NRRL B-24157 / PYR-1) (Mycobacterium vanbaalenii).